A 321-amino-acid chain; its full sequence is MSGSAIATARRAFLGMSHSPLLGLNPVAADDQIAIDKAIAAARAAVHEFAPELIVLLGPDHYNGFFNELMPPFCIGSQATAVGDYLSPAGPLNVAGELAIALADHLMDRHFDIAVSRRMLVDHGFSQALQFLWGDEMDTPPVIPIFMNAVAQPGIARMARCKALGEGVGSFLDQLPLRTLLIGSGGLSHEPPVPTLAHPDPAVRERITVRSTPTEQERELKTERVKAAGLALAHGDSWMKPLNPEWDLQWMDAMASGQLDGLCAMNEASIGAMAGNSAHESKTWLVARSALPANTRLSCPVRAYRAIPSLIAGYGVMFMHH.

Histidine 123 acts as the Proton donor in catalysis. Histidine 189 acts as the Proton acceptor in catalysis.

Belongs to the LigB/MhpB extradiol dioxygenase family. Homotetramer. Fe(2+) is required as a cofactor.

It carries out the reaction 3-(2,3-dihydroxyphenyl)propanoate + O2 = (2Z,4E)-2-hydroxy-6-oxonona-2,4-dienedioate + H(+). The catalysed reaction is (2E)-3-(2,3-dihydroxyphenyl)prop-2-enoate + O2 = (2Z,4E,7E)-2-hydroxy-6-oxonona-2,4,7-trienedioate + H(+). It functions in the pathway aromatic compound metabolism; 3-phenylpropanoate degradation. Catalyzes the non-heme iron(II)-dependent oxidative cleavage of 2,3-dihydroxyphenylpropionic acid and 2,3-dihydroxicinnamic acid into 2-hydroxy-6-ketononadienedioate and 2-hydroxy-6-ketononatrienedioate, respectively. The protein is 2,3-dihydroxyphenylpropionate/2,3-dihydroxicinnamic acid 1,2-dioxygenase (mhpB) of Comamonas testosteroni (Pseudomonas testosteroni).